The following is a 196-amino-acid chain: Probable GTP-binding protein EngB (196 aa).

The EngB-type G domain occupies 21-195; that stretch reads DVSEICLIGR…YELIDKLLGS (175 aa). GTP is bound by residues 29–36, 56–60, 75–78, 142–145, and 174–176; these read GRSNVGKS, GKTRL, DAPG, TKLD, and ISN. Mg(2+) is bound by residues serine 36 and threonine 58.

Belongs to the TRAFAC class TrmE-Era-EngA-EngB-Septin-like GTPase superfamily. EngB GTPase family. Requires Mg(2+) as cofactor.

Functionally, necessary for normal cell division and for the maintenance of normal septation. In Mycoplasma mycoides subsp. mycoides SC (strain CCUG 32753 / NCTC 10114 / PG1), this protein is Probable GTP-binding protein EngB.